A 627-amino-acid polypeptide reads, in one-letter code: Zinc finger MYM-type protein 5 (627 aa).

Positions methionine 1–arginine 23 are disordered. A compositionally biased stretch (polar residues) spans glycine 12 to arginine 23. A Glycyl lysine isopeptide (Lys-Gly) (interchain with G-Cter in SUMO2) cross-link involves residue lysine 59. Residues aspartate 91–asparagine 123 form a disordered region. Glycyl lysine isopeptide (Lys-Gly) (interchain with G-Cter in SUMO2) cross-links involve residues lysine 137 and lysine 195. The MYM-type 1 zinc finger occupies histidine 234 to threonine 268. The MYM-type 2; degenerate zinc finger occupies glutamine 280–isoleucine 319. MYM-type zinc fingers lie at residues histidine 326 to tyrosine 354 and lysine 370 to asparagine 396. Residues glutamate 405–glutamate 429 form a disordered region. Glycyl lysine isopeptide (Lys-Gly) (interchain with G-Cter in SUMO2) cross-links involve residues lysine 408, lysine 427, and lysine 517.

In terms of assembly, interacts (via N-terminal 120 amino acid region) with ETV5 (via C-terminal).

It is found in the nucleus. In terms of biological role, functions as a transcriptional regulator. In Mus musculus (Mouse), this protein is Zinc finger MYM-type protein 5 (Zmym5).